We begin with the raw amino-acid sequence, 121 residues long: Small ribosomal subunit protein bS6 (121 aa).

Belongs to the bacterial ribosomal protein bS6 family.

Functionally, binds together with bS18 to 16S ribosomal RNA. This Rickettsia conorii (strain ATCC VR-613 / Malish 7) protein is Small ribosomal subunit protein bS6.